The chain runs to 342 residues: Pre-mRNA-splicing factor 18 (342 aa).

The protein belongs to the PRP18 family. In terms of assembly, interacts with the spliceosome. Part of a complex containing U4/U6 snRNPs.

It localises to the nucleus speckle. Functionally, participates in the second step of pre-mRNA splicing. The polypeptide is Pre-mRNA-splicing factor 18 (prpf18) (Xenopus laevis (African clawed frog)).